Reading from the N-terminus, the 781-residue chain is Catalase-peroxidase (781 aa).

The signal sequence occupies residues 1-20 (MLYIYYLFKSLFFHTLFVFS). Residues 125 to 272 (WHSAGTYRIG…LAAVQMGLIY (148 aa)) constitute a cross-link (tryptophyl-tyrosyl-methioninium (Trp-Tyr) (with M-298)). The active-site Proton acceptor is His126. The disordered stretch occupies residues 237-256 (VHHPDEHRGAKEKAAKNSDS). Residues 272 to 298 (YVNPEGPDGRPDPLASARDIRETFARM) constitute a cross-link (tryptophyl-tyrosyl-methioninium (Tyr-Met) (with W-125)). His313 lines the heme b pocket. A disordered region spans residues 317-336 (KTHGAAPADNVGPEPEAGEL).

Belongs to the peroxidase family. Peroxidase/catalase subfamily. Homodimer or homotetramer. The cofactor is heme b. In terms of processing, formation of the three residue Trp-Tyr-Met cross-link is important for the catalase, but not the peroxidase activity of the enzyme.

It carries out the reaction H2O2 + AH2 = A + 2 H2O. It catalyses the reaction 2 H2O2 = O2 + 2 H2O. Its function is as follows. Bifunctional enzyme with both catalase and broad-spectrum peroxidase activity. The protein is Catalase-peroxidase of Xylella fastidiosa (strain 9a5c).